A 390-amino-acid polypeptide reads, in one-letter code: Succinate--CoA ligase [ADP-forming] subunit beta (390 aa).

The region spanning 9–245 is the ATP-grasp domain; it reads KHLLKKYNIP…TTQEDEHETM (237 aa). Residues Lys-46, 53–55, Glu-99, Ser-102, and Glu-107 contribute to the ATP site; that span reads GRG. Mg(2+)-binding residues include Asn-200 and Asp-214. Substrate contacts are provided by residues Asn-265 and 322–324; that span reads GIV.

It belongs to the succinate/malate CoA ligase beta subunit family. As to quaternary structure, heterotetramer of two alpha and two beta subunits. Requires Mg(2+) as cofactor.

The enzyme catalyses succinate + ATP + CoA = succinyl-CoA + ADP + phosphate. The catalysed reaction is GTP + succinate + CoA = succinyl-CoA + GDP + phosphate. It functions in the pathway carbohydrate metabolism; tricarboxylic acid cycle; succinate from succinyl-CoA (ligase route): step 1/1. In terms of biological role, succinyl-CoA synthetase functions in the citric acid cycle (TCA), coupling the hydrolysis of succinyl-CoA to the synthesis of either ATP or GTP and thus represents the only step of substrate-level phosphorylation in the TCA. The beta subunit provides nucleotide specificity of the enzyme and binds the substrate succinate, while the binding sites for coenzyme A and phosphate are found in the alpha subunit. The protein is Succinate--CoA ligase [ADP-forming] subunit beta of Coxiella burnetii (strain CbuK_Q154) (Coxiella burnetii (strain Q154)).